Consider the following 162-residue polypeptide: Corticoliberin-2 (162 aa).

The first 24 residues, 1-24, serve as a signal peptide directing secretion; sequence MRLNFLVTTMALLVAFPPPYECRA. Positions 25–119 are excised as a propeptide; it reads IDSSSNQPVT…ALDSEERERR (95 aa). The interval 57–79 is disordered; that stretch reads LGNRNKNSPRSPPDTYPEASQYS. F160 is modified (phenylalanine amide).

This sequence belongs to the sauvagine/corticotropin-releasing factor/urotensin I family.

The protein resides in the secreted. In terms of biological role, this hormone from hypothalamus regulates the release of corticotropin from pituitary gland. The sequence is that of Corticoliberin-2 (crf2) from Catostomus commersonii (White sucker).